We begin with the raw amino-acid sequence, 69 residues long: Atypical cationic antimicrobial peptide (69 aa).

Positions 1–22 (MAFLKKSLFLVLFLGLVSLSIC) are cleaved as a signal peptide. The propeptide occupies 23 to 45 (DEEKRENEDEENQEDDEQSEMRR). The segment at 25–45 (EKRENEDEENQEDDEQSEMRR) is disordered. The span at 30–40 (EDEENQEDDEQ) shows a compositional bias: acidic residues.

Belongs to the frog skin active peptide (FSAP) family. As to quaternary structure, monomer and/or weakly self-associated, oligomer, and amyloid-like fibril. Can adopt a monomeric nonamphipathic alpha-helical conformation, possibly with the aid of its cationic N- and C-termini, when bound to anionic membranes. Forms stable and ordered beta-sheet aggregates in aqueous environment or when bound to anionic or zwitterionic phospholipid vesicles. As to expression, expressed by the skin glands.

Its subcellular location is the secreted. It localises to the target cell membrane. Its function is as follows. Atypical cationic antimicrobial peptide with potent activity against Gram-negative and Gram-positive bacteria. Acts by inducing permeabilization of bacterial membrane. In vitro, also shows chemoattractant activity, which is mediated through a G protein-coupled receptor (probably FPR2 coupled to the ERK1/2 MAPK kinase pathway). Has slow-kinetic self-association and amyloid-like properties that modulate its activity. The soluble, weakly self-associated forms act on leukocytes to promote chemotaxis but have low antibacterial activity, the oligomers exhibit potent antimicrobial activity, whereas the amyloid-like fibrils have a very weak antibacterial activity. The membrane composition has a great influence on the peptide behavior. The peptide induces membrane leakage and insertion to a lesser extent in model membranes of the anionic lipid phosphatidylglycerol (PG) than in the model membranes of the zwitterionic lipid phosphatidylcholine (PC) vesicles. It forms more fibrils in PC than in PG. Membrane perturbations are more observed in the presence of PG than in the presence of PC. The peptide shows low hemolytic activity. In Phyllomedusa sauvagei (Sauvage's leaf frog), this protein is Atypical cationic antimicrobial peptide.